The chain runs to 86 residues: Large ribosomal subunit protein eL43 (86 aa).

The segment at 38–59 adopts a C4-type zinc-finger fold; it reads CPVCGRKAVRRISTGIWQCQKC.

Belongs to the eukaryotic ribosomal protein eL43 family. The cofactor is Zn(2+).

The polypeptide is Large ribosomal subunit protein eL43 (Thermococcus gammatolerans (strain DSM 15229 / JCM 11827 / EJ3)).